The chain runs to 156 residues: Small ribosomal subunit protein uS7 (156 aa).

This sequence belongs to the universal ribosomal protein uS7 family. As to quaternary structure, part of the 30S ribosomal subunit. Contacts proteins S9 and S11.

Its function is as follows. One of the primary rRNA binding proteins, it binds directly to 16S rRNA where it nucleates assembly of the head domain of the 30S subunit. Is located at the subunit interface close to the decoding center, probably blocks exit of the E-site tRNA. This is Small ribosomal subunit protein uS7 from Dinoroseobacter shibae (strain DSM 16493 / NCIMB 14021 / DFL 12).